The chain runs to 341 residues: S-adenosylmethionine:tRNA ribosyltransferase-isomerase (341 aa).

The protein belongs to the QueA family. Monomer.

It localises to the cytoplasm. The enzyme catalyses 7-aminomethyl-7-carbaguanosine(34) in tRNA + S-adenosyl-L-methionine = epoxyqueuosine(34) in tRNA + adenine + L-methionine + 2 H(+). It functions in the pathway tRNA modification; tRNA-queuosine biosynthesis. Transfers and isomerizes the ribose moiety from AdoMet to the 7-aminomethyl group of 7-deazaguanine (preQ1-tRNA) to give epoxyqueuosine (oQ-tRNA). The polypeptide is S-adenosylmethionine:tRNA ribosyltransferase-isomerase (Chlorobium phaeovibrioides (strain DSM 265 / 1930) (Prosthecochloris vibrioformis (strain DSM 265))).